The sequence spans 486 residues: Aspartyl/glutamyl-tRNA(Asn/Gln) amidotransferase subunit B (486 aa).

It belongs to the GatB/GatE family. GatB subfamily. Heterotrimer of A, B and C subunits.

It catalyses the reaction L-glutamyl-tRNA(Gln) + L-glutamine + ATP + H2O = L-glutaminyl-tRNA(Gln) + L-glutamate + ADP + phosphate + H(+). It carries out the reaction L-aspartyl-tRNA(Asn) + L-glutamine + ATP + H2O = L-asparaginyl-tRNA(Asn) + L-glutamate + ADP + phosphate + 2 H(+). Its function is as follows. Allows the formation of correctly charged Asn-tRNA(Asn) or Gln-tRNA(Gln) through the transamidation of misacylated Asp-tRNA(Asn) or Glu-tRNA(Gln) in organisms which lack either or both of asparaginyl-tRNA or glutaminyl-tRNA synthetases. The reaction takes place in the presence of glutamine and ATP through an activated phospho-Asp-tRNA(Asn) or phospho-Glu-tRNA(Gln). The sequence is that of Aspartyl/glutamyl-tRNA(Asn/Gln) amidotransferase subunit B from Leptospira borgpetersenii serovar Hardjo-bovis (strain JB197).